A 623-amino-acid polypeptide reads, in one-letter code: Chaperone protein dnaK (623 aa).

Residues 598–623 (TPDAGAEGGAAPSQDDAIETDFSTEK) are disordered.

The protein belongs to the heat shock protein 70 family.

Its subcellular location is the plastid. The protein resides in the chloroplast. Functionally, acts as a chaperone. The sequence is that of Chaperone protein dnaK from Emiliania huxleyi (Coccolithophore).